Here is a 1037-residue protein sequence, read N- to C-terminus: Importin-8 (1037 aa).

One can recognise an Importin N-terminal domain in the interval 22–102 (AENELNQSYK…RDNIVEGIIR (81 aa)). A compositionally biased stretch (basic and acidic residues) spans 886–895 (DRSKAEKADM). Positions 886 to 934 (DRSKAEKADMEENEEISSDEEETNVTAQAMQSNNGRGEDEEEEDDDWDE) are disordered. The segment covering 896–908 (EENEEISSDEEET) has biased composition (acidic residues). A phosphoserine mark is found at Ser902 and Ser903. A compositionally biased stretch (polar residues) spans 909–920 (NVTAQAMQSNNG). Residues 923–934 (EDEEEEDDDWDE) are compositionally biased toward acidic residues.

It belongs to the importin beta family. Forms a heterodimer with KPNB1. Interacts with SRP19. Interacts with RPL23A. Binds directly to nuclear pore complexes. Interacts with LRPPRC; the interaction occurs when LRPPRC is in its RNA-free form and promotes import of LRPPRC to the nucleus to allow for EIF4E-mediated export of mRNAS from the nucleus to the cytoplasm.

It localises to the cytoplasm. It is found in the nucleus. In terms of biological role, involved in nuclear protein import, either by acting as autonomous nuclear transport receptor or as an adapter-like protein in association with the importin-beta subunit KPNB1. Acting autonomously, may serve as receptor for nuclear localization signals (NLS) and promote translocation of import substrates through the nuclear pore complex (NPC) by an energy requiring, Ran-dependent mechanism. At the nucleoplasmic side of the NPC, Ran binds to importin, the importin/substrate complex dissociates and importin is re-exported from the nucleus to the cytoplasm where GTP hydrolysis releases Ran. The directionality of nuclear import is thought to be conferred by an asymmetric distribution of the GTP- and GDP-bound forms of Ran between the cytoplasm and nucleus. In vitro mediates the nuclear import of the signal recognition particle protein SRP19. May also be involved in cytoplasm-to-nucleus shuttling of a broad spectrum of other cargos, including Argonaute-microRNAs complexes, the JUN protein, RELA/NF-kappa-B p65 subunit, the translation initiation factor EIF4E and a set of receptor-activated mothers against decapentaplegic homolog (SMAD) transcription factors that play a critical role downstream of the large family of transforming growth factor beta and bone morphogenetic protein (BMP) cytokines. In Homo sapiens (Human), this protein is Importin-8 (IPO8).